Reading from the N-terminus, the 225-residue chain is Holliday junction branch migration complex subunit RuvA (225 aa).

A domain I region spans residues 1–68 (MIGWLQGQKV…DDGSSLFGFP (68 aa)). A domain II region spans residues 69–147 (ERRERDMFRT…EFSCRDPGMS (79 aa)). Positions 148 to 158 (LVDNGVIDSHQ) are flexible linker. The segment at 159-225 (LKDSSLHELQ…SLRWLSQEAA (67 aa)) is domain III.

Belongs to the RuvA family. Homotetramer. Forms an RuvA(8)-RuvB(12)-Holliday junction (HJ) complex. HJ DNA is sandwiched between 2 RuvA tetramers; dsDNA enters through RuvA and exits via RuvB. An RuvB hexamer assembles on each DNA strand where it exits the tetramer. Each RuvB hexamer is contacted by two RuvA subunits (via domain III) on 2 adjacent RuvB subunits; this complex drives branch migration. In the full resolvosome a probable DNA-RuvA(4)-RuvB(12)-RuvC(2) complex forms which resolves the HJ.

It is found in the cytoplasm. The RuvA-RuvB-RuvC complex processes Holliday junction (HJ) DNA during genetic recombination and DNA repair, while the RuvA-RuvB complex plays an important role in the rescue of blocked DNA replication forks via replication fork reversal (RFR). RuvA specifically binds to HJ cruciform DNA, conferring on it an open structure. The RuvB hexamer acts as an ATP-dependent pump, pulling dsDNA into and through the RuvAB complex. HJ branch migration allows RuvC to scan DNA until it finds its consensus sequence, where it cleaves and resolves the cruciform DNA. The protein is Holliday junction branch migration complex subunit RuvA of Prochlorococcus marinus (strain MIT 9313).